The primary structure comprises 63 residues: Small ribosomal subunit protein bS21 (63 aa).

Belongs to the bacterial ribosomal protein bS21 family.

This Porphyromonas gingivalis (strain ATCC 33277 / DSM 20709 / CIP 103683 / JCM 12257 / NCTC 11834 / 2561) protein is Small ribosomal subunit protein bS21.